The following is a 192-amino-acid chain: UPF0312 protein PputW619_0484 (192 aa).

The signal sequence occupies residues 1–23; sequence MLKKTFAALALGTALLSAGQAMA.

Belongs to the UPF0312 family. Type 1 subfamily.

It is found in the periplasm. In Pseudomonas putida (strain W619), this protein is UPF0312 protein PputW619_0484.